The primary structure comprises 267 residues: Geranylgeranylglyceryl phosphate synthase (267 aa).

Mg(2+)-binding residues include Asp-23 and Ser-52. Residues 173–179, 205–206, and 227–228 contribute to the sn-glycerol 1-phosphate site; these read YLEAGSG, GG, and GT.

It belongs to the GGGP/HepGP synthase family. Group II subfamily. Requires Mg(2+) as cofactor.

It localises to the cytoplasm. It carries out the reaction sn-glycerol 1-phosphate + (2E,6E,10E)-geranylgeranyl diphosphate = sn-3-O-(geranylgeranyl)glycerol 1-phosphate + diphosphate. Its pathway is membrane lipid metabolism; glycerophospholipid metabolism. Prenyltransferase that catalyzes the transfer of the geranylgeranyl moiety of geranylgeranyl diphosphate (GGPP) to the C3 hydroxyl of sn-glycerol-1-phosphate (G1P). This reaction is the first ether-bond-formation step in the biosynthesis of archaeal membrane lipids. This is Geranylgeranylglyceryl phosphate synthase from Caldivirga maquilingensis (strain ATCC 700844 / DSM 13496 / JCM 10307 / IC-167).